The chain runs to 180 residues: Ribosome-recycling factor (180 aa).

The protein belongs to the RRF family.

The protein localises to the cytoplasm. Responsible for the release of ribosomes from messenger RNA at the termination of protein biosynthesis. May increase the efficiency of translation by recycling ribosomes from one round of translation to another. The polypeptide is Ribosome-recycling factor (Chlamydia abortus (strain DSM 27085 / S26/3) (Chlamydophila abortus)).